Here is a 427-residue protein sequence, read N- to C-terminus: Zinc finger protein DPF3 (427 aa).

The tract at residues 182–244 is disordered; the sequence is LENDENADEV…NDAASQDDHD (63 aa). The span at 184-199 shows a compositional bias: acidic residues; that stretch reads NDENADEVNEEEDLEE. The segment covering 233-244 has biased composition (basic and acidic residues); sequence RRNDAASQDDHD. The C2H2-type zinc finger occupies 247–270; that stretch reads YVCDICGKRYKNRPGLSYHYAHTH. The segment at 272–301 is disordered; the sequence is ASEEGDEAREQETRSSPVHRNENHKPQKGP. Residues 279–296 are compositionally biased toward basic and acidic residues; that stretch reads AREQETRSSPVHRNENHK. 2 PHD-type zinc fingers span residues 308 to 368 and 365 to 415; these read NNYC…CKSC and CKSC…CREL.

It belongs to the requiem/DPF family. In terms of assembly, component of the BAF complex. Interacts with acetylated histones H3 and H4. Component of neuron-specific chromatin remodeling complex (nBAF complex), a subfamily of ATP-dependent SWI/SNF chromatin remodeling complexes. In terms of tissue distribution, expressed in the heart and somites.

It is found in the nucleus. Its function is as follows. Muscle-specific component of the BAF complex, a multiprotein complex involved in transcriptional activation and repression of select genes by chromatin remodeling (alteration of DNA-nucleosome topology). Specifically binds acetylated lysines on histone 3 and 4. In the complex, it acts as a tissue-specific anchor between histone acetylations and methylations and chromatin remodeling. It thereby probably plays an essential role in heart and skeletal muscle development. Belongs to the neuron-specific chromatin remodeling complex (nBAF complex) and plays a role in neural development. The chain is Zinc finger protein DPF3 (DPF3) from Gallus gallus (Chicken).